We begin with the raw amino-acid sequence, 251 residues long: Aliphatic sulfonates import ATP-binding protein SsuB (251 aa).

One can recognise an ABC transporter domain in the interval 3-231; it reads VSINEVSKYF…PRSKNSESFQ (229 aa). 39 to 46 is an ATP binding site; it reads GPSGCGKS.

This sequence belongs to the ABC transporter superfamily. Aliphatic sulfonates importer (TC 3.A.1.17.2) family. In terms of assembly, the complex is composed of two ATP-binding proteins (SsuB), two transmembrane proteins (SsuC) and a solute-binding protein (SsuA).

Its subcellular location is the cell membrane. The enzyme catalyses ATP + H2O + aliphatic sulfonate-[sulfonate-binding protein]Side 1 = ADP + phosphate + aliphatic sulfonateSide 2 + [sulfonate-binding protein]Side 1.. Functionally, part of the ABC transporter complex SsuABC involved in aliphatic sulfonates import. Responsible for energy coupling to the transport system. The chain is Aliphatic sulfonates import ATP-binding protein SsuB from Bacillus cereus (strain ZK / E33L).